A 117-amino-acid polypeptide reads, in one-letter code: Immunoglobulin kappa variable 1-16 (117 aa).

A signal peptide spans 1–22 (MDMRVLAQLLGLLLLCFPGARC). A framework-1 region spans residues 23-45 (DIQMTQSPSSLSASVGDRVTITC). Positions 24 to 117 (IQMTQSPSSL…YYCQQYNSYP (94 aa)) constitute an Ig-like domain. Cysteines 45 and 110 form a disulfide. Residues 46–56 (RASQGISNYLA) are complementarity-determining-1. The framework-2 stretch occupies residues 57–71 (WFQQKPGKAPKSLIY). Residues 72–78 (AASSLQS) are complementarity-determining-2. Positions 79–110 (GVPSKFSGSGSGTDFTLTISSLQPEDFATYYC) are framework-3. Positions 111–117 (QQYNSYP) are complementarity-determining-3.

Immunoglobulins are composed of two identical heavy chains and two identical light chains; disulfide-linked.

The protein resides in the secreted. It localises to the cell membrane. Functionally, v region of the variable domain of immunoglobulin light chains that participates in the antigen recognition. Immunoglobulins, also known as antibodies, are membrane-bound or secreted glycoproteins produced by B lymphocytes. In the recognition phase of humoral immunity, the membrane-bound immunoglobulins serve as receptors which, upon binding of a specific antigen, trigger the clonal expansion and differentiation of B lymphocytes into immunoglobulins-secreting plasma cells. Secreted immunoglobulins mediate the effector phase of humoral immunity, which results in the elimination of bound antigens. The antigen binding site is formed by the variable domain of one heavy chain, together with that of its associated light chain. Thus, each immunoglobulin has two antigen binding sites with remarkable affinity for a particular antigen. The variable domains are assembled by a process called V-(D)-J rearrangement and can then be subjected to somatic hypermutations which, after exposure to antigen and selection, allow affinity maturation for a particular antigen. The chain is Immunoglobulin kappa variable 1-16 from Homo sapiens (Human).